Reading from the N-terminus, the 282-residue chain is MSIDNKLFVTEEDEEDRTQDRADVEDESNDIDMIADENGTNSAIANEQEEKSEEVKAEDDTGEEEEDDPVIEEFPLKISGEEESLHVFQYANRPRLVGRKPAEHPFISAARYKPKSHLWEIDIPLDEQAFYNKDKAESEWNGVNVQTLKGVGVENNGQYAAFVKDMQVYLVPIERVAQLKPFFKYIDDANVTRKQEDARRNPNPSSQRAQVVTMSVKSVNDPSQNRLTGSLLAHKVADEEANIELTWAEGTFEQFKDTIVKEAEDKTLVALEKQEDYIDNLV.

Residues 1-70 (MSIDNKLFVT…TGEEEEDDPV (70 aa)) are disordered. Acidic residues-rich tracts occupy residues 10 to 35 (TEED…DMIA) and 60 to 70 (DTGEEEEDDPV). At threonine 61 the chain carries Phosphothreonine.

As to quaternary structure, component of the RNA polymerase III (Pol III) complex consisting of 17 subunits. Interacts with RPC53/RPC4. RPC53/RPC4, RPC37/RPC5 and RPC11/RPC10 probably form a Pol III subcomplex.

It is found in the nucleus. Functionally, DNA-dependent RNA polymerase catalyzes the transcription of DNA into RNA using the four ribonucleoside triphosphates as substrates. Specific peripheric component of RNA polymerase III which synthesizes small RNAs, such as 5S rRNA and tRNAs. The RPC53/RPC4-RPC37/RPC5 subcomplex is required for terminator recognition and reinitiation. In Saccharomyces cerevisiae (strain ATCC 204508 / S288c) (Baker's yeast), this protein is DNA-directed RNA polymerase III subunit RPC5 (RPC37).